A 319-amino-acid polypeptide reads, in one-letter code: Glutathione synthetase (319 aa).

Residues 129-314 (KLAILNFSRF…VAAMFADAVA (186 aa)) enclose the ATP-grasp domain. 155–211 (LKEHGDIIIKPLDGMGGMGIFRLTEKDPNIGSILETLMQLDSRTIMAQRYIPEIVHG) is an ATP binding site. Residues Glu-285 and Asn-287 each contribute to the Mg(2+) site.

Belongs to the prokaryotic GSH synthase family. Mg(2+) is required as a cofactor. The cofactor is Mn(2+).

The enzyme catalyses gamma-L-glutamyl-L-cysteine + glycine + ATP = glutathione + ADP + phosphate + H(+). Its pathway is sulfur metabolism; glutathione biosynthesis; glutathione from L-cysteine and L-glutamate: step 2/2. The sequence is that of Glutathione synthetase from Neisseria meningitidis serogroup B (strain ATCC BAA-335 / MC58).